The chain runs to 124 residues: Small ribosomal subunit protein uS12 (124 aa).

The segment at Met-1–Gln-29 is disordered. A 3-methylthioaspartic acid modification is found at Asp-89. Residues Ala-101–Ser-124 are disordered. The span at Arg-111–Ser-124 shows a compositional bias: basic residues.

This sequence belongs to the universal ribosomal protein uS12 family. Part of the 30S ribosomal subunit. Contacts proteins S8 and S17. May interact with IF1 in the 30S initiation complex.

Its function is as follows. With S4 and S5 plays an important role in translational accuracy. Functionally, interacts with and stabilizes bases of the 16S rRNA that are involved in tRNA selection in the A site and with the mRNA backbone. Located at the interface of the 30S and 50S subunits, it traverses the body of the 30S subunit contacting proteins on the other side and probably holding the rRNA structure together. The combined cluster of proteins S8, S12 and S17 appears to hold together the shoulder and platform of the 30S subunit. The protein is Small ribosomal subunit protein uS12 of Alkalilimnicola ehrlichii (strain ATCC BAA-1101 / DSM 17681 / MLHE-1).